A 471-amino-acid chain; its full sequence is Arginine biosynthesis bifunctional protein ArgJ, mitochondrial (471 aa).

Positions 190, 216, 239, 327, 466, and 471 each coordinate substrate. The Nucleophile role is filled by Thr239.

The protein belongs to the ArgJ family. In terms of assembly, heterodimer of an alpha and a beta chain. The alpha and beta chains are autoproteolytically processed from a single precursor protein within the mitochondrion.

Its subcellular location is the mitochondrion matrix. The enzyme catalyses N(2)-acetyl-L-ornithine + L-glutamate = N-acetyl-L-glutamate + L-ornithine. It catalyses the reaction L-glutamate + acetyl-CoA = N-acetyl-L-glutamate + CoA + H(+). Its pathway is amino-acid biosynthesis; L-arginine biosynthesis; L-ornithine and N-acetyl-L-glutamate from L-glutamate and N(2)-acetyl-L-ornithine (cyclic): step 1/1. It functions in the pathway amino-acid biosynthesis; L-arginine biosynthesis; N(2)-acetyl-L-ornithine from L-glutamate: step 1/4. Catalyzes two activities which are involved in the cyclic version of arginine biosynthesis: the synthesis of acetylglutamate from glutamate and acetyl-CoA, and of ornithine by transacetylation between acetylornithine and glutamate. In Coprinopsis cinerea (strain Okayama-7 / 130 / ATCC MYA-4618 / FGSC 9003) (Inky cap fungus), this protein is Arginine biosynthesis bifunctional protein ArgJ, mitochondrial.